The chain runs to 427 residues: Glucose-1-phosphate adenylyltransferase (427 aa).

Alpha-D-glucose 1-phosphate is bound by residues Tyr112, Gly177, 192-193 (EK), and Ser210.

Belongs to the bacterial/plant glucose-1-phosphate adenylyltransferase family. Homotetramer.

The enzyme catalyses alpha-D-glucose 1-phosphate + ATP + H(+) = ADP-alpha-D-glucose + diphosphate. It participates in glycan biosynthesis; glycogen biosynthesis. Its function is as follows. Involved in the biosynthesis of ADP-glucose, a building block required for the elongation reactions to produce glycogen. Catalyzes the reaction between ATP and alpha-D-glucose 1-phosphate (G1P) to produce pyrophosphate and ADP-Glc. The protein is Glucose-1-phosphate adenylyltransferase of Methylobacillus flagellatus (strain ATCC 51484 / DSM 6875 / VKM B-1610 / KT).